Consider the following 857-residue polypeptide: Trehalose transporter 1 (857 aa).

Disordered stretches follow at residues 1–28 and 62–202; these read MSGR…KLKE and DPFL…QKAT. The Cytoplasmic portion of the chain corresponds to 1–392; the sequence is MSGRDNRGAG…VYRPTTNPIY (392 aa). Ala-9 is subject to Phosphothreonine. Gly-12 bears the Phosphoserine mark. The span at 69–81 shows a compositional bias: polar residues; it reads VSPQRHPQNTVRT. Basic and acidic residues predominate over residues 134–143; the sequence is EIREHRDRQQ. Residues 171–181 are compositionally biased toward polar residues; sequence GNSNTNSNKAA. Residues Ser-248, Ser-249, and Ser-250 each carry the phosphoserine modification. Disordered stretches follow at residues 249-269 and 280-299; these read SSEE…HQSL and VLQG…EHKR. Ser-320 and Ser-322 each carry phosphoserine. Residues 327 to 346 are disordered; sequence LTSRQHFQQQRSISTDSRKS. Residues 330–341 show a composition bias toward polar residues; the sequence is RQHFQQQRSIST. A helical transmembrane segment spans residues 393 to 413; sequence IWTQVLAALSVSLGSLVVGFV. Topologically, residues 414 to 440 are extracellular; that stretch reads SAYTSPALVSMTDRNITSFEVTQDAGS. Asn-428 carries an N-linked (GlcNAc...) asparagine glycan. Residues 441–461 traverse the membrane as a helical segment; it reads WVGGIMPLAGLAGGIAGGPLI. Topologically, residues 462-473 are cytoplasmic; the sequence is EYLGRRNTILAT. The chain crosses the membrane as a helical span at residues 474-494; sequence AVPFIVSSLLIACAVNVAMVL. The Extracellular segment spans residues 495–497; the sequence is CGR. Residues 498–518 traverse the membrane as a helical segment; it reads FLAGFCVGIASLSLPVYLGET. At 519–528 the chain is on the cytoplasmic side; that stretch reads VQPEVRGTLG. The chain crosses the membrane as a helical span at residues 529–549; the sequence is LLPTAFGNIGILLCFVAGSFM. Asn-550 carries N-linked (GlcNAc...) asparagine glycosylation. Residues 550–552 are Extracellular-facing; that stretch reads NWS. The helical transmembrane segment at 553–573 threads the bilayer; it reads MLAFLGAALPVPFLILMFLIP. Topologically, residues 574-636 are cytoplasmic; it reads ETPRWFVGRG…ELLKLNNLKP (63 aa). A helical transmembrane segment spans residues 637-657; it reads LSISLGLMFFQQFSGINAVIF. Residues 658 to 673 are Extracellular-facing; it reads YTVQIFKDAGSTIDGN. Residues 674–694 form a helical membrane-spanning segment; sequence LCTIIVGIVNFLATFIGIVLI. The Cytoplasmic portion of the chain corresponds to 695-700; it reads DRAGRK. Residues 701–721 traverse the membrane as a helical segment; the sequence is ILLYVSDIAMVLTLFVLGGFF. Residues 722-740 lie on the Extracellular side of the membrane; that stretch reads YCKTYGPDVSHLGWLPLTC. The chain crosses the membrane as a helical span at residues 741 to 761; that stretch reads FVIYILGFSLGFGPIPWLMMG. Over 762 to 767 the chain is Cytoplasmic; sequence EILPAK. A helical membrane pass occupies residues 768-788; that stretch reads IRGSAASVATAFNWFCTFVVT. Over 789 to 801 the chain is Extracellular; it reads KTFQDLTVAMGAH. Residues 802–822 form a helical membrane-spanning segment; sequence GAFWLFGAICFVGLFFVIIYV. At 823–857 the chain is on the cytoplasmic side; that stretch reads PETQGKTLEDIERKMMGRVRRMSSVANIKPLSFNM. Ser-845 and Ser-846 each carry phosphoserine.

The protein belongs to the major facilitator superfamily. Sugar transporter (TC 2.A.1.1) family. Trehalose transporter subfamily. In terms of tissue distribution, expressed in perineurial glia of the outer layer of the nervous system that forms the blood brain barrier (at protein level). Expressed in the fat body (at protein level). As to expression, may be specifically expressed in perineurial glia (at protein level). May be specifically expressed in the fat body (at protein level).

The protein localises to the cell membrane. It is found in the vesicle. The catalysed reaction is alpha,alpha-trehalose(in) = alpha,alpha-trehalose(out). It catalyses the reaction D-glucose(out) = D-glucose(in). Low-capacity facilitative transporter for trehalose. Can also transport glucose. Does not transport maltose, sucrose, lactose or fructose. Mediates the bidirectional transfer of trehalose. Responsible for the transport of trehalose synthesized in the fat body and the incorporation of trehalose into other tissues that require a carbon source, thereby regulating trehalose levels in the hemolymph. Required in glial cells of the blood brain barrier to fuel glycolysis but not required in neurons. Neurons rely on the citric acid cycle for their energy needs and utilise alanine and lactate, by-products of glial cell glycolysis released into the hemolymph, as fuel. Increased expression in glial cells of the blood brain barrier during starvation and increased cell surface localization enhances carbohydrate uptake to protect the central nervous system from restricted nutrient availability. This chain is Trehalose transporter 1, found in Drosophila melanogaster (Fruit fly).